The following is an 89-amino-acid chain: Large ribosomal subunit protein bL27 (89 aa).

It belongs to the bacterial ribosomal protein bL27 family.

This Bacteroides fragilis (strain ATCC 25285 / DSM 2151 / CCUG 4856 / JCM 11019 / LMG 10263 / NCTC 9343 / Onslow / VPI 2553 / EN-2) protein is Large ribosomal subunit protein bL27.